Consider the following 1013-residue polypeptide: Tolloid-like protein 1 (1013 aa).

A signal peptide spans 1–30 (MGLQALSPRMLLWLVVSGIVFSRVLWVCAG). Positions 31–147 (LDYDYTFDGN…EQSEKNRVPR (117 aa)) are excised as a propeptide. A disordered region spans residues 124 to 150 (QNNTMKGKAPPKLSEQSEKNRVPRAAT). Positions 148 to 347 (AATSRTERIW…AQARKLYRCP (200 aa)) constitute a Peptidase M12A domain. Residue Asn169 is glycosylated (N-linked (GlcNAc...) asparagine). 4 cysteine pairs are disulfide-bonded: Cys190/Cys346, Cys210/Cys232, Cys212/Cys213, and Cys349/Cys375. His240 is a binding site for Zn(2+). Glu241 is an active-site residue. Positions 244 and 250 each coordinate Zn(2+). CUB domains follow at residues 349 to 461 (CGET…YEAI) and 462 to 574 (CGGE…FFKE). N-linked (GlcNAc...) asparagine glycosylation is found at Asn359 and Asn390. 15 cysteine pairs are disulfide-bonded: Cys402–Cys424, Cys462–Cys488, Cys515–Cys537, Cys578–Cys590, Cys586–Cys599, Cys601–Cys614, Cys618–Cys644, Cys671–Cys693, Cys734–Cys745, Cys741–Cys754, Cys756–Cys769, Cys774–Cys800, Cys827–Cys849, Cys887–Cys917, and Cys944–Cys966. Positions 574 to 615 (EEDECAKPDRGGCEQRCLNTLGSYQCACEPGYELGPDRRSCE) constitute an EGF-like 1; calcium-binding domain. The CUB 3 domain occupies 618–730 (CGGLLTKLNG…KGFKAHFFSD (113 aa)). Asn626 is a glycosylation site (N-linked (GlcNAc...) asparagine). Residues 730 to 770 (DKDECSKDNGGCQHECVNTMGSYTCQCRNGFVLHENKHDCK) enclose the EGF-like 2; calcium-binding domain. CUB domains follow at residues 774-886 (CEQK…HSTE) and 887-1003 (CGGR…YKSI).

Zn(2+) is required as a cofactor. As to expression, highly expressed in brain and kidney and weakly in lung, skeletal muscle. A perceptible level of expression is observed in heart and testis.

It localises to the secreted. Its function is as follows. Protease which processes procollagen C-propeptides, such as chordin, pro-biglycan and pro-lysyl oxidase. Required for the embryonic development, especially heart development. Predominant protease, which in the development, influences dorsal-ventral patterning and skeletogenesis. In Mus musculus (Mouse), this protein is Tolloid-like protein 1 (Tll1).